Reading from the N-terminus, the 96-residue chain is ATP-dependent Clp protease adapter protein ClpS (96 aa).

This sequence belongs to the ClpS family. Binds to the N-terminal domain of the chaperone ClpA.

Involved in the modulation of the specificity of the ClpAP-mediated ATP-dependent protein degradation. This Campylobacter jejuni subsp. jejuni serotype O:6 (strain 81116 / NCTC 11828) protein is ATP-dependent Clp protease adapter protein ClpS.